A 163-amino-acid polypeptide reads, in one-letter code: Putative 4-hydroxy-4-methyl-2-oxoglutarate aldolase (163 aa).

Substrate is bound by residues 76–79 and R98; that span reads GDML. D99 contacts a divalent metal cation.

Belongs to the class II aldolase/RraA-like family. Homotrimer. It depends on a divalent metal cation as a cofactor.

The catalysed reaction is 4-hydroxy-4-methyl-2-oxoglutarate = 2 pyruvate. It carries out the reaction oxaloacetate + H(+) = pyruvate + CO2. Its function is as follows. Catalyzes the aldol cleavage of 4-hydroxy-4-methyl-2-oxoglutarate (HMG) into 2 molecules of pyruvate. Also contains a secondary oxaloacetate (OAA) decarboxylase activity due to the common pyruvate enolate transition state formed following C-C bond cleavage in the retro-aldol and decarboxylation reactions. This chain is Putative 4-hydroxy-4-methyl-2-oxoglutarate aldolase, found in Pseudomonas putida (strain W619).